The following is a 174-amino-acid chain: NADPH-dependent 7-cyano-7-deazaguanine reductase (174 aa).

Catalysis depends on C72, which acts as the Thioimide intermediate. D79 functions as the Proton donor in the catalytic mechanism. Residues V94 to S96 and H113 to E114 contribute to the substrate site.

It belongs to the GTP cyclohydrolase I family. QueF type 1 subfamily.

The protein localises to the cytoplasm. The catalysed reaction is 7-aminomethyl-7-carbaguanine + 2 NADP(+) = 7-cyano-7-deazaguanine + 2 NADPH + 3 H(+). It functions in the pathway tRNA modification; tRNA-queuosine biosynthesis. Catalyzes the NADPH-dependent reduction of 7-cyano-7-deazaguanine (preQ0) to 7-aminomethyl-7-deazaguanine (preQ1). The polypeptide is NADPH-dependent 7-cyano-7-deazaguanine reductase (Synechococcus elongatus (strain ATCC 33912 / PCC 7942 / FACHB-805) (Anacystis nidulans R2)).